The following is a 649-amino-acid chain: uncharacterized protein (649 aa).

The protein localises to the nucleus. It is found in the cytoplasm. This is an uncharacterized protein from Schizosaccharomyces pombe (strain 972 / ATCC 24843) (Fission yeast).